Reading from the N-terminus, the 470-residue chain is Methylenetetrahydrofolate--tRNA-(uracil-5-)-methyltransferase TrmFO (470 aa).

10–15 is a binding site for FAD; that stretch reads GAGLAG.

This sequence belongs to the MnmG family. TrmFO subfamily. FAD is required as a cofactor.

The protein localises to the cytoplasm. The catalysed reaction is uridine(54) in tRNA + (6R)-5,10-methylene-5,6,7,8-tetrahydrofolate + NADH + H(+) = 5-methyluridine(54) in tRNA + (6S)-5,6,7,8-tetrahydrofolate + NAD(+). The enzyme catalyses uridine(54) in tRNA + (6R)-5,10-methylene-5,6,7,8-tetrahydrofolate + NADPH + H(+) = 5-methyluridine(54) in tRNA + (6S)-5,6,7,8-tetrahydrofolate + NADP(+). In terms of biological role, catalyzes the folate-dependent formation of 5-methyl-uridine at position 54 (M-5-U54) in all tRNAs. In Prochlorococcus marinus (strain MIT 9312), this protein is Methylenetetrahydrofolate--tRNA-(uracil-5-)-methyltransferase TrmFO.